Consider the following 194-residue polypeptide: 7-methyl-GTP pyrophosphatase (194 aa).

D69 functions as the Proton acceptor in the catalytic mechanism.

The protein belongs to the Maf family. YceF subfamily. Requires a divalent metal cation as cofactor.

The protein localises to the cytoplasm. The catalysed reaction is N(7)-methyl-GTP + H2O = N(7)-methyl-GMP + diphosphate + H(+). Nucleoside triphosphate pyrophosphatase that hydrolyzes 7-methyl-GTP (m(7)GTP). May have a dual role in cell division arrest and in preventing the incorporation of modified nucleotides into cellular nucleic acids. This chain is 7-methyl-GTP pyrophosphatase (yceF1), found in Salmonella paratyphi A (strain ATCC 9150 / SARB42).